Consider the following 204-residue polypeptide: MEEENIYPIFDRMLSRKDKEELLGQRGVMLWLTGLSGSGKSTIAIALERELHKRGLLCRILDGDNIRSGINNNLGFSAEDRVENIRRIAEIGKLFVDTGIITIAAFISPGNELRQMAARIIGIEDFLEIYVSTPLVECEKRDVKGLYAKARRGEIKNFTGISAPFEAPEHPALSLDTSKLSLEESVNTLLELVLPIVGKKGEKI.

An ATP-binding site is contributed by glycine 34–serine 41. Serine 108 functions as the Phosphoserine intermediate in the catalytic mechanism.

Belongs to the APS kinase family.

The enzyme catalyses adenosine 5'-phosphosulfate + ATP = 3'-phosphoadenylyl sulfate + ADP + H(+). Its pathway is sulfur metabolism; hydrogen sulfide biosynthesis; sulfite from sulfate: step 2/3. Its function is as follows. Catalyzes the synthesis of activated sulfate. The polypeptide is Adenylyl-sulfate kinase (Phocaeicola vulgatus (strain ATCC 8482 / DSM 1447 / JCM 5826 / CCUG 4940 / NBRC 14291 / NCTC 11154) (Bacteroides vulgatus)).